A 632-amino-acid polypeptide reads, in one-letter code: 2-oxoacid:ferredoxin oxidoreductase subunit alpha (632 aa).

The YPITP motif signature appears at Tyr254–Pro258. Substrate is bound by residues Thr257 and Arg345.

Heterodimer composed of an alpha and a beta subunit.

The enzyme catalyses a 2-oxocarboxylate + 2 oxidized [2Fe-2S]-[ferredoxin] + CoA = an acyl-CoA + 2 reduced [2Fe-2S]-[ferredoxin] + CO2 + H(+). Catalyzes the coenzyme A-dependent oxidative decarboxylation of different 2-oxoacids such as 2-oxoglutarate, pyruvate and 2-oxobutyrate to form their CoA derivatives. The chain is 2-oxoacid:ferredoxin oxidoreductase subunit alpha from Saccharolobus solfataricus (Sulfolobus solfataricus).